The chain runs to 912 residues: Rho guanine nucleotide exchange factor 1 (912 aa).

One can recognise an RGSL domain in the interval Glu-41–Arg-232. The disordered stretch occupies residues Lys-248–Ser-413. Over residues Asp-283 to Asn-313 the composition is skewed to basic and acidic residues. The segment covering Ser-365 to Gly-381 has biased composition (acidic residues). 2 positions are modified to phosphoserine: Ser-374 and Ser-409. Residues Lys-416–Ala-605 enclose the DH domain. A PH domain is found at Lys-647 to Gly-760. Thr-695 bears the Phosphothreonine mark. Position 738 is a phosphotyrosine; by JAK2 (Tyr-738). Disordered regions lie at residues Lys-763 to Ala-802 and Ala-841 to Ala-865. Over residues Pro-777–Glu-789 the composition is skewed to low complexity. Position 863 is a phosphoserine (Ser-863). Positions Ala-865–Pro-896 form a coiled coil.

Interacts with RHOA, GNA12 and GNA13. Homooligomerizes through the coiled coil region. May interact with CCPG1. Interacts with CTNNAL1. Phosphorylated by PKCA. Angiotensin-2 induced Tyr-738 phosphorylation is mediated by JAK2. Ubiquitously expressed.

It is found in the cytoplasm. Its subcellular location is the membrane. Seems to play a role in the regulation of RhoA GTPase by guanine nucleotide-binding alpha-12 (GNA12) and alpha-13 (GNA13) subunits. Acts as a GTPase-activating protein (GAP) for GNA12 and GNA13, and as guanine nucleotide exchange factor (GEF) for RhoA GTPase. Activated G alpha 13/GNA13 stimulates the RhoGEF activity through interaction with the RGS-like domain. This GEF activity is inhibited by binding to activated GNA12. Mediates angiotensin-2-induced RhoA activation. In lymphoid follicles, may trigger activation of GNA13 as part of S1PR2-dependent signaling pathway that leads to inhibition of germinal center (GC) B cell growth and migration outside the GC niche. In Homo sapiens (Human), this protein is Rho guanine nucleotide exchange factor 1 (ARHGEF1).